The primary structure comprises 504 residues: Probable cytochrome P450 513F1 (504 aa).

The chain crosses the membrane as a helical span at residues 1-21 (MILSLLFLFVITLYFLIPSRI). Cys449 provides a ligand contact to heme.

It belongs to the cytochrome P450 family. Heme is required as a cofactor.

The protein localises to the membrane. The sequence is that of Probable cytochrome P450 513F1 (cyp513F1) from Dictyostelium discoideum (Social amoeba).